The following is a 65-amino-acid chain: Muscarinic toxin-like protein 1 (65 aa).

4 disulfide bridges follow: C3/C24, C17/C42, C46/C57, and C58/C63.

The protein belongs to the three-finger toxin family. Short-chain subfamily. Type C muscarinic toxin sub-subfamily. As to quaternary structure, monomer. In terms of tissue distribution, expressed by the venom gland.

It localises to the secreted. Functionally, binds weakly to the muscarinic acetylcholine receptor (CHRM). The protein is Muscarinic toxin-like protein 1 of Naja kaouthia (Monocled cobra).